A 495-amino-acid chain; its full sequence is Keratin, type II cuticular 87 (495 aa).

The segment at 1–111 (MSCFSSRLGA…PNAQCVKHEE (111 aa)) is head. The region spanning 111-422 (EKEQIKCLNS…RLLEGEEQRL (312 aa)) is the IF rod domain. The coil 1A stretch occupies residues 112–146 (KEQIKCLNSKFAAFIDKVRFLEQQNKLLETKWQFY). Residues 147–156 (QNRKCCESNM) are linker 1. Positions 157 to 257 (EPLFEGYIEA…YEEETRLLHS (101 aa)) are coil 1B. Positions 258 to 274 (HISDTSVVVKMDNSRDL) are linker 12. The segment at 275-418 (NMDCVVAEIK…ITYRRLLEGE (144 aa)) is coil 2. The tail stretch occupies residues 419–494 (EQRLCEGVGS…TCGSSRSVRF (76 aa)).

Belongs to the intermediate filament family. In terms of assembly, heterotetramer of two type I and two type II keratins.

In Mus musculus (Mouse), this protein is Keratin, type II cuticular 87.